The following is a 340-amino-acid chain: MDTWTVLLILQASLVLPGAVGTRTNTRTAPTPILRFVAVGDWGGVPNAPFHTAREMANAKAIATTVKTLGADFILSLGDNFYFTGVHDAKDKRFQETFEDVFSDPSLRNVPWHVLAGNHDHLGNVSAQIAYSKISKRWNFPSPYYRLRFKIPRSNVSVAIFMLDTVTLCGNSDDFVSQQPERPRNLALARTQLAWIKKQLAAAKEDYVLVAGHYPVWSIAEHGPTHCLVKQLLPLLTTHKVTAYLCGHDHNLQYLQDENGLGFVLSGAGNFMDPSKKHLRKVPNGYLRFHFGAENSLGGFAYVEITPKEMSVTYIEASGKSLFKTKLPRRARSEHQHRRA.

An N-terminal signal peptide occupies residues 1–20 (MDTWTVLLILQASLVLPGAV). Aspartate 41, aspartate 79, tyrosine 82, and asparagine 118 together coordinate Fe cation. N-linked (GlcNAc...) asparagine glycans are attached at residues asparagine 124 and asparagine 155. A disulfide bond links cysteine 169 and cysteine 227. Fe cation is bound by residues histidine 213, histidine 248, and histidine 250.

It depends on Fe cation as a cofactor.

The protein localises to the secreted. The catalysed reaction is a phosphate monoester + H2O = an alcohol + phosphate. Its function is as follows. Uteroferrin is a phosphoprotein phosphatase, synthesized in response to progesterone. It appears to function in transplacental transport of iron in pig. This is Tartrate-resistant acid phosphatase type 5 (ACP5) from Sus scrofa (Pig).